The following is a 151-amino-acid chain: NADH-quinone oxidoreductase subunit I 2 (151 aa).

4Fe-4S ferredoxin-type domains lie at 49–82 (PRLNINPDNGETLCISCNLCALACPENLIVVTSE) and 93–122 (VTFTYDTSRCMFCGLCEDACPVDALELTQD). [4Fe-4S] cluster contacts are provided by C62, C65, C68, C72, C102, C105, C108, and C112.

It belongs to the complex I 23 kDa subunit family. In terms of assembly, NDH-1 is composed of 14 different subunits. Subunits NuoA, H, J, K, L, M, N constitute the membrane sector of the complex. Requires [4Fe-4S] cluster as cofactor.

It localises to the cell inner membrane. The catalysed reaction is a quinone + NADH + 5 H(+)(in) = a quinol + NAD(+) + 4 H(+)(out). Functionally, NDH-1 shuttles electrons from NADH, via FMN and iron-sulfur (Fe-S) centers, to quinones in the respiratory chain. The immediate electron acceptor for the enzyme in this species is believed to be ubiquinone. Couples the redox reaction to proton translocation (for every two electrons transferred, four hydrogen ions are translocated across the cytoplasmic membrane), and thus conserves the redox energy in a proton gradient. This is NADH-quinone oxidoreductase subunit I 2 from Solibacter usitatus (strain Ellin6076).